Consider the following 174-residue polypeptide: Co-chaperone protein HscB (174 aa).

The 73-residue stretch at 2 to 74 (NYFALFDLPR…LNRAIYFLCL (73 aa)) folds into the J domain.

The protein belongs to the HscB family. Interacts with HscA and stimulates its ATPase activity. Interacts with IscU.

Co-chaperone involved in the maturation of iron-sulfur cluster-containing proteins. Seems to help targeting proteins to be folded toward HscA. This is Co-chaperone protein HscB from Buchnera aphidicola subsp. Acyrthosiphon pisum (strain 5A).